The sequence spans 102 residues: Small ribosomal subunit protein uS10 (102 aa).

This sequence belongs to the universal ribosomal protein uS10 family. In terms of assembly, part of the 30S ribosomal subunit.

Its function is as follows. Involved in the binding of tRNA to the ribosomes. This chain is Small ribosomal subunit protein uS10, found in Thermococcus kodakarensis (strain ATCC BAA-918 / JCM 12380 / KOD1) (Pyrococcus kodakaraensis (strain KOD1)).